The following is a 286-amino-acid chain: Cysteine-rich repeat secretory protein 57 (286 aa).

An N-terminal signal peptide occupies residues 1–20; that stretch reads METTKKLSVLLCLFFTMNQA. Residues 21–265 lie on the Extracellular side of the membrane; the sequence is ISESDSDEHM…PSRSGSFSIR (245 aa). Gnk2-homologous domains lie at 29–131 and 137–247; these read HMAT…DKFF and TKPN…TSNS. N-linked (GlcNAc...) asparagine glycosylation is found at asparagine 35, asparagine 40, asparagine 44, asparagine 60, asparagine 69, asparagine 90, asparagine 100, asparagine 108, asparagine 209, and asparagine 246. The helical transmembrane segment at 266-284 threads the bilayer; the sequence is GNNKILVGMILAVSVFAFL. Residues 285-286 lie on the Cytoplasmic side of the membrane; it reads GL.

Belongs to the cysteine-rich repeat secretory protein family.

It localises to the membrane. The polypeptide is Cysteine-rich repeat secretory protein 57 (CRRSP57) (Arabidopsis thaliana (Mouse-ear cress)).